Consider the following 248-residue polypeptide: Probable transcriptional regulatory protein PFL_4766 (248 aa).

It belongs to the TACO1 family.

It is found in the cytoplasm. In Pseudomonas fluorescens (strain ATCC BAA-477 / NRRL B-23932 / Pf-5), this protein is Probable transcriptional regulatory protein PFL_4766.